Reading from the N-terminus, the 445-residue chain is MGRLFGTDGVRGVANRELTAELALALGAATAQHLASSTGPGRRVAVVGRDPRASGEMLEAAVIAGLTSQGVDALRVGVLPTPAVAYLTGAYDADFGVMISASHNPMPDNGIKIFGPGGHKLDDATEDRIESLVAAGPGLRPVGSEIGRVIDAEDAADRYLRHVSKACTTRLDGLTVVVDCAHGAASEVGPRAYRAAGARVIEINADPNGLNINDDCGSTHLEAIRAAVLAHGADLGVAHDGDADRCLAVDANGDLVDGDAIMVVLALAMQEAGELASDTLVTTVMSNLGLHLAMREAGVNVRTTGVGDRYVLEELRAGDYSLGGEQSGHIVMPGLGSTGDGIVTGLRLMTRMVATGASLAALASRMQTLPQVLINVQVTDKAAAAAAPSVQAAVDRAETELGDTGRILLRPSGTEPLIRVMVEAADEEAAHRLATSVADAVSAAG.

Ser-102 functions as the Phosphoserine intermediate in the catalytic mechanism. Positions 102, 240, 242, and 244 each coordinate Mg(2+). Phosphoserine is present on Ser-102.

The protein belongs to the phosphohexose mutase family. Requires Mg(2+) as cofactor. Post-translationally, activated by phosphorylation.

It carries out the reaction alpha-D-glucosamine 1-phosphate = D-glucosamine 6-phosphate. In terms of biological role, catalyzes the conversion of glucosamine-6-phosphate to glucosamine-1-phosphate. The protein is Phosphoglucosamine mutase of Mycobacterium marinum (strain ATCC BAA-535 / M).